The sequence spans 392 residues: 2,3-bisphosphoglycerate-independent phosphoglycerate mutase (392 aa).

It belongs to the BPG-independent phosphoglycerate mutase family. A-PGAM subfamily.

It catalyses the reaction (2R)-2-phosphoglycerate = (2R)-3-phosphoglycerate. Its pathway is carbohydrate degradation; glycolysis; pyruvate from D-glyceraldehyde 3-phosphate: step 3/5. In terms of biological role, catalyzes the interconversion of 2-phosphoglycerate and 3-phosphoglycerate. This Methanothrix thermoacetophila (strain DSM 6194 / JCM 14653 / NBRC 101360 / PT) (Methanosaeta thermophila) protein is 2,3-bisphosphoglycerate-independent phosphoglycerate mutase.